The primary structure comprises 182 residues: Troponin I, fast skeletal muscle (182 aa).

The residue at position 2 (Gly2) is an N-acetylglycine. Residues 2–48 (GDEEKRNRAITARRQHLKSVMLQIAATELEKEESRRESEKQNYLSEH) are involved in binding TNC. Thr12 carries the phosphothreonine modification. Residues 29 to 41 (ELEKEESRRESEK) are compositionally biased toward basic and acidic residues. A disordered region spans residues 29–53 (ELEKEESRRESEKQNYLSEHCPPLH). Residues 97 to 117 (NQKLFDLRGKFKRPPLRRVRM) form an involved in binding TNC and actin region. Phosphoserine is present on Ser118.

The protein belongs to the troponin I family. In terms of assembly, binds to actin and tropomyosin.

In terms of biological role, troponin I is the inhibitory subunit of troponin, the thin filament regulatory complex which confers calcium-sensitivity to striated muscle actomyosin ATPase activity. The polypeptide is Troponin I, fast skeletal muscle (Tnni2) (Rattus norvegicus (Rat)).